The following is a 98-amino-acid chain: uncharacterized protein (98 aa).

This is an uncharacterized protein from Invertebrate iridescent virus 6 (IIV-6).